Consider the following 363-residue polypeptide: Flagellar P-ring protein (363 aa).

Positions 1–18 (MWKKVLIAIVFITSFSFA) are cleaved as a signal peptide.

Belongs to the FlgI family. As to quaternary structure, the basal body constitutes a major portion of the flagellar organelle and consists of four rings (L,P,S, and M) mounted on a central rod.

It localises to the periplasm. The protein resides in the bacterial flagellum basal body. In terms of biological role, assembles around the rod to form the L-ring and probably protects the motor/basal body from shearing forces during rotation. This is Flagellar P-ring protein from Sulfurihydrogenibium sp. (strain YO3AOP1).